The primary structure comprises 272 residues: Shikimate dehydrogenase (NADP(+)) (272 aa).

Residues 14–16 and T61 contribute to the shikimate site; that span reads SKS. K65 (proton acceptor) is an active-site residue. E77 is a binding site for NADP(+). Residues N86 and D102 each contribute to the shikimate site. Residues 126 to 130, 149 to 154, and M213 each bind NADP(+); these read GAGGA and NRTASR. Y215 lines the shikimate pocket. Residue G237 participates in NADP(+) binding.

It belongs to the shikimate dehydrogenase family. In terms of assembly, homodimer.

The enzyme catalyses shikimate + NADP(+) = 3-dehydroshikimate + NADPH + H(+). It participates in metabolic intermediate biosynthesis; chorismate biosynthesis; chorismate from D-erythrose 4-phosphate and phosphoenolpyruvate: step 4/7. Functionally, involved in the biosynthesis of the chorismate, which leads to the biosynthesis of aromatic amino acids. Catalyzes the reversible NADPH linked reduction of 3-dehydroshikimate (DHSA) to yield shikimate (SA). The protein is Shikimate dehydrogenase (NADP(+)) of Salmonella choleraesuis (strain SC-B67).